The sequence spans 365 residues: tRNA 2-selenouridine synthase (365 aa).

Positions 15–138 (LVSDHPIMDA…MRQFLIETID (124 aa)) constitute a Rhodanese domain. C98 (S-selanylcysteine intermediate) is an active-site residue.

The protein belongs to the SelU family. In terms of assembly, monomer.

It carries out the reaction 5-methylaminomethyl-2-thiouridine(34) in tRNA + selenophosphate + (2E)-geranyl diphosphate + H2O + H(+) = 5-methylaminomethyl-2-selenouridine(34) in tRNA + (2E)-thiogeraniol + phosphate + diphosphate. The enzyme catalyses 5-methylaminomethyl-2-thiouridine(34) in tRNA + (2E)-geranyl diphosphate = 5-methylaminomethyl-S-(2E)-geranyl-thiouridine(34) in tRNA + diphosphate. It catalyses the reaction 5-methylaminomethyl-S-(2E)-geranyl-thiouridine(34) in tRNA + selenophosphate + H(+) = 5-methylaminomethyl-2-(Se-phospho)selenouridine(34) in tRNA + (2E)-thiogeraniol. The catalysed reaction is 5-methylaminomethyl-2-(Se-phospho)selenouridine(34) in tRNA + H2O = 5-methylaminomethyl-2-selenouridine(34) in tRNA + phosphate. Its function is as follows. Involved in the post-transcriptional modification of the uridine at the wobble position (U34) of tRNA(Lys), tRNA(Glu) and tRNA(Gln). Catalyzes the conversion of 2-thiouridine (S2U-RNA) to 2-selenouridine (Se2U-RNA). Acts in a two-step process involving geranylation of 2-thiouridine (S2U) to S-geranyl-2-thiouridine (geS2U) and subsequent selenation of the latter derivative to 2-selenouridine (Se2U) in the tRNA chain. The protein is tRNA 2-selenouridine synthase of Shewanella piezotolerans (strain WP3 / JCM 13877).